Here is a 301-residue protein sequence, read N- to C-terminus: Sulfate adenylyltransferase subunit 2 (301 aa).

Positions 282-301 (RLIDRDEAGSMEKKKREGYF) are disordered.

The protein belongs to the PAPS reductase family. CysD subfamily. In terms of assembly, heterodimer composed of CysD, the smaller subunit, and CysN.

It catalyses the reaction sulfate + ATP + H(+) = adenosine 5'-phosphosulfate + diphosphate. Its pathway is sulfur metabolism; hydrogen sulfide biosynthesis; sulfite from sulfate: step 1/3. Functionally, with CysN forms the ATP sulfurylase (ATPS) that catalyzes the adenylation of sulfate producing adenosine 5'-phosphosulfate (APS) and diphosphate, the first enzymatic step in sulfur assimilation pathway. APS synthesis involves the formation of a high-energy phosphoric-sulfuric acid anhydride bond driven by GTP hydrolysis by CysN coupled to ATP hydrolysis by CysD. The polypeptide is Sulfate adenylyltransferase subunit 2 (Chelativorans sp. (strain BNC1)).